Here is a 675-residue protein sequence, read N- to C-terminus: Protein REPRESSOR OF VERNALIZATION 1 (675 aa).

Residues 1–143 (MGRRRRFTQQ…DPVKVTGKGK (143 aa)) form a disordered region. Over residues 22–31 (AEPPKTAKPA) the composition is skewed to low complexity. The span at 48–70 (EEEDEDEEDELELEDEEDDEKDL) shows a compositional bias: acidic residues. Residues 71-86 (EEMRRNEEEERREETR) are compositionally biased toward basic and acidic residues. Residues 73-80 (MRRNEEEE) carry the Nuclear localization signal motif. A compositionally biased stretch (basic residues) spans 87–96 (TRRRRGRKPK). The segment covering 113 to 127 (SDEEEEEEVREEDST) has biased composition (acidic residues). Residues 157-275 (NTFELEDPVL…TVAKKLWNLT (119 aa)) form the BAH domain. Disordered stretches follow at residues 300-349 (ELPD…KPET), 493-512 (GLTPAEKTSEPEESRRLQMT), and 587-675 (LASP…ADHE). 3 stretches are compositionally biased toward basic and acidic residues: residues 333 to 346 (VSRDATGKSEHFVK), 499 to 512 (KTSEPEESRRLQMT), and 613 to 627 (KLEKQKSFTKPKPEE). The region spanning 372–518 (YRDKWLDKLL…LQMTDARCER (147 aa)) is the TFIIS central domain.

Expressed constitutively.

It is found in the nucleus. Functionally, component of a grass-specific mechanism of vernalization, a process by which prolonged cold exposure provides competence to flower in daylengths longer than 12 hours. Negative regulator of flowering required for vernalization establishment by repressing VRN1 before vernalization and in the fall season. This is Protein REPRESSOR OF VERNALIZATION 1 from Brachypodium distachyon (Purple false brome).